Reading from the N-terminus, the 528-residue chain is MERLAARIMLLAGWRRALLAIASGAVGALALPPVGFFAALFFSFSMLVWLLDGVSGNPDRSWSRGLRSAFWIGWLFGFGYFVAGLWWLGNALMVEADEFAWALPLAVLGLPAVLAVFYGLACLAARLLWSEGLGRIAALAAMFGITEWLRSFIATGFPWNAIGYGAMPIPLMMQSAAVLGLFGVSALAVFVFAAPALLGTRRGAKLGLALAGILFCGHLGYGAYRLSLPEPDGRKVTVRLVQPNIDQAAKMDDTDRVAIFEKHLRLTAVPTPADQPRPDVIVWPETTIPFILTENPDALRQIAGALQEGQVLITGTVRSEDQGAGIAPRYYNSIYAIDSQGQILAAADKVHLVPFGEYVPWQDILSKLGITNIIDLPGGFSQGASRSLMTLPGGLKLYPLICYEVIFPDEMVKGLSGANAIINVTNDAWFGDTPGPFQHFQQARLRAVETGLPIIRAANNGISALIDGRGRVFSGLRLNAEGVENATFTLSAAPETNVNHNKCNFWAVTALLLSAAVISRLGLISRVN.

The next 5 helical transmembrane spans lie at isoleucine 8–alanine 28, alanine 69–glycine 89, phenylalanine 99–glycine 119, valine 178–leucine 198, and glycine 203–alanine 223. Residues valine 241–leucine 490 enclose the CN hydrolase domain. Glutamate 285 (proton acceptor) is an active-site residue. Lysine 349 is an active-site residue. The Nucleophile role is filled by cysteine 402.

Belongs to the CN hydrolase family. Apolipoprotein N-acyltransferase subfamily.

Its subcellular location is the cell inner membrane. The catalysed reaction is N-terminal S-1,2-diacyl-sn-glyceryl-L-cysteinyl-[lipoprotein] + a glycerophospholipid = N-acyl-S-1,2-diacyl-sn-glyceryl-L-cysteinyl-[lipoprotein] + a 2-acyl-sn-glycero-3-phospholipid + H(+). Its pathway is protein modification; lipoprotein biosynthesis (N-acyl transfer). Catalyzes the phospholipid dependent N-acylation of the N-terminal cysteine of apolipoprotein, the last step in lipoprotein maturation. This is Apolipoprotein N-acyltransferase from Allorhizobium ampelinum (strain ATCC BAA-846 / DSM 112012 / S4) (Agrobacterium vitis (strain S4)).